The sequence spans 572 residues: Urease subunit alpha (572 aa).

The Urease domain maps to 132 to 572 (GGFDSHIHFI…LPMAQRYFMY (441 aa)). His137, His139, and Lys220 together coordinate Ni(2+). Lys220 is modified (N6-carboxylysine). His222 contacts substrate. 2 residues coordinate Ni(2+): His249 and His275. Residue His323 is the Proton donor of the active site. Asp363 provides a ligand contact to Ni(2+).

This sequence belongs to the metallo-dependent hydrolases superfamily. Urease alpha subunit family. As to quaternary structure, heterotrimer of UreA (gamma), UreB (beta) and UreC (alpha) subunits. Three heterotrimers associate to form the active enzyme. Ni cation is required as a cofactor. Post-translationally, carboxylation allows a single lysine to coordinate two nickel ions.

It localises to the cytoplasm. The catalysed reaction is urea + 2 H2O + H(+) = hydrogencarbonate + 2 NH4(+). The protein operates within nitrogen metabolism; urea degradation; CO(2) and NH(3) from urea (urease route): step 1/1. In Bradyrhizobium diazoefficiens (strain JCM 10833 / BCRC 13528 / IAM 13628 / NBRC 14792 / USDA 110), this protein is Urease subunit alpha.